A 493-amino-acid chain; its full sequence is Cholesteryl ester transfer protein (493 aa).

The signal sequence occupies residues 1-17; it reads MLAATVLTLALLGNVHA. Asparagine 59 and asparagine 105 each carry an N-linked (GlcNAc...) asparagine glycan. Cysteine 160 and cysteine 201 are oxidised to a cystine. 3 N-linked (GlcNAc...) asparagine glycosylation sites follow: asparagine 257, asparagine 358, and asparagine 413.

This sequence belongs to the BPI/LBP/Plunc superfamily. BPI/LBP family. As to expression, probably primarily expressed in liver and adipose tissues. Detected in adrenal gland, mesenteric fat, spleen and aorta.

It localises to the secreted. The enzyme catalyses cholesteryl (9Z-octadecenoate)(in) = cholesteryl (9Z-octadecenoate)(out). It carries out the reaction 1,2,3-tri-(9Z-octadecenoyl)-glycerol(in) = 1,2,3-tri-(9Z-octadecenoyl)-glycerol(out). The catalysed reaction is cholesteryl (9Z,12Z)-octadecadienoate(in) = cholesteryl (9Z,12Z)-octadecadienoate(out). Involved in the transfer of neutral lipids, including cholesteryl ester and triglyceride, among lipoprotein particles. Allows the net movement of cholesteryl ester from high density lipoproteins/HDL to triglyceride-rich very low density lipoproteins/VLDL, and the equimolar transport of triglyceride from VLDL to HDL. Regulates the reverse cholesterol transport, by which excess cholesterol is removed from peripheral tissues and returned to the liver for elimination. This chain is Cholesteryl ester transfer protein, found in Macaca fascicularis (Crab-eating macaque).